The sequence spans 720 residues: Polyribonucleotide nucleotidyltransferase (720 aa).

2 residues coordinate Mg(2+): aspartate 487 and aspartate 493. Positions 554–613 (PRIETFKIPTDKIREVIGTGGKVIREIVEKTGAKVNIEDDGTVKVASSDGEAMKAAIKWI) constitute a KH domain. Residues 623-691 (GQIYDGTVVK…DRGKTRLSMK (69 aa)) form the S1 motif domain. The interval 692–720 (AVDQTTGEDLEAKQKAEGGAEAPREAAGE) is disordered. The span at 701-720 (LEAKQKAEGGAEAPREAAGE) shows a compositional bias: basic and acidic residues.

It belongs to the polyribonucleotide nucleotidyltransferase family. It depends on Mg(2+) as a cofactor.

It localises to the cytoplasm. The catalysed reaction is RNA(n+1) + phosphate = RNA(n) + a ribonucleoside 5'-diphosphate. Its function is as follows. Involved in mRNA degradation. Catalyzes the phosphorolysis of single-stranded polyribonucleotides processively in the 3'- to 5'-direction. This Bradyrhizobium sp. (strain BTAi1 / ATCC BAA-1182) protein is Polyribonucleotide nucleotidyltransferase.